The sequence spans 315 residues: MKLLAIKVECSYELEDGLSFFMQDELDAQGIESRKRSDFVLEGQKHDSSLVELDDIENLPEDLELTAYFEYKNADKKKIIQKITDKIAEMKGYGLDAGNVSISTKEVADEDWNTAWQKYYHVIDFSRHLAIVPEWEDYQPAFSDQQLIRLDPGLAFGTGGHTTTQLVLLAMERALVKPMSVLDVGTGSGILAIAASKLGASHVLGTDISDEAVTAAKENIALNNIDNIDVRKANLLKDIDEKYDLIVANILADILLELIPDLDNHLNENGKIIFSGIDYLQLPKIEKALEENNFVIKMKMQEGRWIGLLIARKPN.

Residues T164, G185, D207, and N249 each coordinate S-adenosyl-L-methionine.

Belongs to the methyltransferase superfamily. PrmA family.

It localises to the cytoplasm. The catalysed reaction is L-lysyl-[protein] + 3 S-adenosyl-L-methionine = N(6),N(6),N(6)-trimethyl-L-lysyl-[protein] + 3 S-adenosyl-L-homocysteine + 3 H(+). In terms of biological role, methylates ribosomal protein L11. The sequence is that of Ribosomal protein L11 methyltransferase from Lactobacillus johnsonii (strain CNCM I-12250 / La1 / NCC 533).